The following is a 76-amino-acid chain: Large ribosomal subunit protein uL30 (76 aa).

The protein belongs to the universal ribosomal protein uL30 family. Part of the 50S ribosomal subunit.

This chain is Large ribosomal subunit protein uL30, found in Anaeromyxobacter dehalogenans (strain 2CP-1 / ATCC BAA-258).